Consider the following 1003-residue polypeptide: Alpha-1,4 glucan phosphorylase L isozyme, chloroplastic/amyloplastic (1003 aa).

Residues 1 to 64 constitute a chloroplast transit peptide; it reads MASMTMRFHP…RRRSAFSVKC (64 aa). 2 disordered regions span residues 71 to 91 and 526 to 593; these read KQKV…SSFA and SSEE…KKLP. Residues 537–553 show a composition bias toward acidic residues; it reads GEEEETSKEGGEEEEEK. Residues 569 to 580 are compositionally biased toward basic and acidic residues; sequence EVEKAIAEKDGT. Lys-849 is modified (N6-(pyridoxal phosphate)lysine).

The protein belongs to the glycogen phosphorylase family. Pyridoxal 5'-phosphate serves as cofactor. As to expression, found predominantly in cotyledons and early seed coat.

Its subcellular location is the plastid. It is found in the chloroplast. The protein resides in the amyloplast. The catalysed reaction is [(1-&gt;4)-alpha-D-glucosyl](n) + phosphate = [(1-&gt;4)-alpha-D-glucosyl](n-1) + alpha-D-glucose 1-phosphate. Its function is as follows. Phosphorylase is an important allosteric enzyme in carbohydrate metabolism. Enzymes from different sources differ in their regulatory mechanisms and in their natural substrates. However, all known phosphorylases share catalytic and structural properties. Functionally, the L isoform exhibits higher affinity for unbranched substrates such as glucan-like amylose and maltodextrin. The chain is Alpha-1,4 glucan phosphorylase L isozyme, chloroplastic/amyloplastic (PHO1) from Vicia faba (Broad bean).